An 852-amino-acid polypeptide reads, in one-letter code: MADPEDPRDAGDVLGDDSFPLSSLANLFEVEDTPSPAEPSRGPPGAVDGKQNLRMKFHGAFRKGPPKPMELLESTIYESSVVPAPKKAPMDSLFDYGTYRQHPSENKRWRRRVVEKPVAGTKGPAPNPPPILKVFNRPILFDIVSRGSPDGLEGLLSFLLTHKKRLTDEEFREPSTGKTCLPKALLNLSAGRNDTIPILLDIAEKTGNMREFINSPFRDVYYRGQTALHIAIERRCKHYVELLVEKGADVHAQARGRFFQPKDEGGYFYFGELPLSLAACTNQPHIVHYLTENGHKQADLRRQDSRGNTVLHALVAIADNTRENTKFVTKMYDLLLIKCAKLFPDTNLEALLNNDGLSPLMMAAKTGKIGIFQHIIRREIADEDVRHLSRKFKDWAYGPVYSSLYDLSSLDTCGEEVSVLEILVYNSKIENRHEMLAVEPINELLRDKWRKFGAVSFYISVVSYLCAMIIFTLIAYYRPMEGPPPYPYTTTIDYLRLAGEIITLLTGILFFFSNIKDLFMKKCPGVNSFFIDGSFQLLYFIYSVLVIVTAGLYLGGVEAYLAVMVFALVLGWMNALYFTRGLKLTGTYSIMIQKILFKDLFRFLLVYLLFMIGYASALVSLLNPCPSSESCSEDHSNCTLPTYPSCRDSQTFSTFLLDLFKLTIGMGDLEMLESAKYPGVFIILLVTYIILTFVLLLNMLIALMGETVGQVSKESKHIWKLQWATTILDIERSFPLFLRRVFRSGEMVTVGKGTDGTPDRRWCFRVDEVNWSHWNQNLGIISEDPGKSDTYQYYGFSHTVGRLRRDRWSTVVPRVVELNKSCPTEDVVVPLGTMGTAEARERRHGQTPSSPL.

Residues 1-455 are Cytoplasmic-facing; sequence MADPEDPRDA…RDKWRKFGAV (455 aa). Positions 30-51 are disordered; it reads VEDTPSPAEPSRGPPGAVDGKQ. ATP-binding positions include K178, K183, N187, 222-225, and R234; that span reads YRGQ. ANK repeat units follow at residues 223-252 and 270-299; these read RGQT…DVHA and FGEL…KQAD. A 1,2-diacyl-sn-glycero-3-phospho-(1D-myo-inositol-4,5-bisphosphate) contacts are provided by residues 235 to 237, 282 to 285, and K330; these read RCK and NQPH. An ANK 3 repeat occupies 355-387; it reads DGLSPLMMAAKTGKIGIFQHIIRREIADEDVRH. A helical transmembrane segment spans residues 456 to 476; that stretch reads SFYISVVSYLCAMIIFTLIAY. The Extracellular segment spans residues 477–493; it reads YRPMEGPPPYPYTTTID. The helical transmembrane segment at 494–520 threads the bilayer; sequence YLRLAGEIITLLTGILFFFSNIKDLFM. The Cytoplasmic segment spans residues 521–533; that stretch reads KKCPGVNSFFIDG. The helical transmembrane segment at 534 to 554 threads the bilayer; the sequence is SFQLLYFIYSVLVIVTAGLYL. Over 555-558 the chain is Extracellular; that stretch reads GGVE. Residues 559-579 traverse the membrane as a helical segment; sequence AYLAVMVFALVLGWMNALYFT. Residues 580–594 lie on the Cytoplasmic side of the membrane; that stretch reads RGLKLTGTYSIMIQK. Residues 595–622 form a helical membrane-spanning segment; the sequence is ILFKDLFRFLLVYLLFMIGYASALVSLL. At 623-651 the chain is on the extracellular side; sequence NPCPSSESCSEDHSNCTLPTYPSCRDSQT. Positions 652–671 form an intramembrane region, pore-forming; sequence FSTFLLDLFKLTIGMGDLEM. The Selectivity filter signature appears at 665–668; it reads GMGD. Ca(2+) is bound at residue D668. Residues 672-679 lie on the Extracellular side of the membrane; sequence LESAKYPG. The chain crosses the membrane as a helical span at residues 680–708; that stretch reads VFIILLVTYIILTFVLLLNMLIALMGETV. Residues 709–852 lie on the Cytoplasmic side of the membrane; the sequence is GQVSKESKHI…RHGQTPSSPL (144 aa).

Belongs to the transient receptor (TC 1.A.4) family. TrpV subfamily. TRPV4 sub-subfamily. In terms of assembly, homotetramer. Interacts with Ca(2+)-calmodulin.

Its subcellular location is the apical cell membrane. The protein localises to the cell junction. It is found in the adherens junction. The catalysed reaction is Ca(2+)(in) = Ca(2+)(out). ATP binding enhances channel sensitivity to agonists. Ca(2+)-calmodulin prevents the ATP-mediated increased sensitivity to agonists. In terms of biological role, non-selective calcium permeant cation channel involved in osmotic sensitivity and mechanosensitivity. Activation by exposure to hypotonicity within the physiological range exhibits an outward rectification. Also activated by phorbol esters. Channel activity seems to be regulated by a calmodulin-dependent mechanism. In Gallus gallus (Chicken), this protein is Transient receptor potential cation channel subfamily V member 4 (TRPV4).